Reading from the N-terminus, the 169-residue chain is Photosystem I assembly protein Ycf3 (169 aa).

TPR repeat units lie at residues 36-69, 73-106, and 121-154; these read AFTY…EIDP, SYIL…NPFL, and GEQA…TPGN.

The protein belongs to the Ycf3 family.

It is found in the plastid. The protein localises to the chloroplast thylakoid membrane. Its function is as follows. Essential for the assembly of the photosystem I (PSI) complex. May act as a chaperone-like factor to guide the assembly of the PSI subunits. The polypeptide is Photosystem I assembly protein Ycf3 (Cucumis sativus (Cucumber)).